The primary structure comprises 224 residues: UPF0758 protein VIBHAR_00653 (224 aa).

One can recognise an MPN domain in the interval 102 to 224; sequence ALTSPEQTKL…SVSFAERGWI (123 aa). Zn(2+) contacts are provided by His-173, His-175, and Asp-186. A JAMM motif motif is present at residues 173-186; sequence HNHPSGVAEPSQAD.

Belongs to the UPF0758 family.

This chain is UPF0758 protein VIBHAR_00653, found in Vibrio campbellii (strain ATCC BAA-1116).